The chain runs to 572 residues: Proline--tRNA ligase (572 aa).

The protein belongs to the class-II aminoacyl-tRNA synthetase family. ProS type 1 subfamily. Homodimer.

It is found in the cytoplasm. It catalyses the reaction tRNA(Pro) + L-proline + ATP = L-prolyl-tRNA(Pro) + AMP + diphosphate. Catalyzes the attachment of proline to tRNA(Pro) in a two-step reaction: proline is first activated by ATP to form Pro-AMP and then transferred to the acceptor end of tRNA(Pro). As ProRS can inadvertently accommodate and process non-cognate amino acids such as alanine and cysteine, to avoid such errors it has two additional distinct editing activities against alanine. One activity is designated as 'pretransfer' editing and involves the tRNA(Pro)-independent hydrolysis of activated Ala-AMP. The other activity is designated 'posttransfer' editing and involves deacylation of mischarged Ala-tRNA(Pro). The misacylated Cys-tRNA(Pro) is not edited by ProRS. The chain is Proline--tRNA ligase from Dichelobacter nodosus (strain VCS1703A).